The primary structure comprises 145 residues: D-aminoacyl-tRNA deacylase (145 aa).

Residues 137 to 138 (GP) carry the Gly-cisPro motif, important for rejection of L-amino acids motif.

The protein belongs to the DTD family. In terms of assembly, homodimer.

The protein resides in the cytoplasm. It carries out the reaction glycyl-tRNA(Ala) + H2O = tRNA(Ala) + glycine + H(+). It catalyses the reaction a D-aminoacyl-tRNA + H2O = a tRNA + a D-alpha-amino acid + H(+). An aminoacyl-tRNA editing enzyme that deacylates mischarged D-aminoacyl-tRNAs. Also deacylates mischarged glycyl-tRNA(Ala), protecting cells against glycine mischarging by AlaRS. Acts via tRNA-based rather than protein-based catalysis; rejects L-amino acids rather than detecting D-amino acids in the active site. By recycling D-aminoacyl-tRNA to D-amino acids and free tRNA molecules, this enzyme counteracts the toxicity associated with the formation of D-aminoacyl-tRNA entities in vivo and helps enforce protein L-homochirality. The chain is D-aminoacyl-tRNA deacylase from Salmonella choleraesuis (strain SC-B67).